The chain runs to 184 residues: ATP synthase subunit b, chloroplastic (184 aa).

A helical membrane pass occupies residues 27–49 (LATNPINLSVVLGVLIFFGKGVL).

The protein belongs to the ATPase B chain family. As to quaternary structure, F-type ATPases have 2 components, F(1) - the catalytic core - and F(0) - the membrane proton channel. F(1) has five subunits: alpha(3), beta(3), gamma(1), delta(1), epsilon(1). F(0) has four main subunits: a(1), b(1), b'(1) and c(10-14). The alpha and beta chains form an alternating ring which encloses part of the gamma chain. F(1) is attached to F(0) by a central stalk formed by the gamma and epsilon chains, while a peripheral stalk is formed by the delta, b and b' chains.

The protein resides in the plastid. The protein localises to the chloroplast thylakoid membrane. Functionally, f(1)F(0) ATP synthase produces ATP from ADP in the presence of a proton or sodium gradient. F-type ATPases consist of two structural domains, F(1) containing the extramembraneous catalytic core and F(0) containing the membrane proton channel, linked together by a central stalk and a peripheral stalk. During catalysis, ATP synthesis in the catalytic domain of F(1) is coupled via a rotary mechanism of the central stalk subunits to proton translocation. In terms of biological role, component of the F(0) channel, it forms part of the peripheral stalk, linking F(1) to F(0). This is ATP synthase subunit b, chloroplastic from Buxus microphylla (Littleleaf boxwood).